Here is a 483-residue protein sequence, read N- to C-terminus: Betaine aldehyde dehydrogenase (483 aa).

K(+)-binding residues include Ile27 and Asp93. An NAD(+)-binding site is contributed by 149-151; that stretch reads GAW. Lys161 (charge relay system) is an active-site residue. 175 to 178 contacts NAD(+); it reads KPSE. Val179 lines the K(+) pocket. 228–231 contacts NAD(+); the sequence is SVPT. Residue Val243 coordinates K(+). Glu249 acts as the Proton acceptor in catalysis. NAD(+) contacts are provided by Gly251, Cys283, and Glu380. Cys283 functions as the Nucleophile in the catalytic mechanism. The residue at position 283 (Cys283) is a Cysteine sulfenic acid (-SOH). K(+)-binding residues include Lys450 and Gly453. Glu457 acts as the Charge relay system in catalysis.

It belongs to the aldehyde dehydrogenase family. As to quaternary structure, dimer of dimers. It depends on K(+) as a cofactor.

The enzyme catalyses betaine aldehyde + NAD(+) + H2O = glycine betaine + NADH + 2 H(+). It functions in the pathway amine and polyamine biosynthesis; betaine biosynthesis via choline pathway; betaine from betaine aldehyde: step 1/1. Functionally, involved in the biosynthesis of the osmoprotectant glycine betaine. Catalyzes the irreversible oxidation of betaine aldehyde to the corresponding acid. This chain is Betaine aldehyde dehydrogenase, found in Cereibacter sphaeroides (strain ATCC 17025 / ATH 2.4.3) (Rhodobacter sphaeroides).